A 97-amino-acid polypeptide reads, in one-letter code: Small ribosomal subunit protein uS19 (97 aa).

This sequence belongs to the universal ribosomal protein uS19 family.

In terms of biological role, protein S19 forms a complex with S13 that binds strongly to the 16S ribosomal RNA. This is Small ribosomal subunit protein uS19 from Salinibacter ruber (strain DSM 13855 / M31).